A 652-amino-acid polypeptide reads, in one-letter code: DNA ligase (652 aa).

Residues 29-33 (DSEYD), 78-79 (SL), and Glu-107 each bind NAD(+). The active-site N6-AMP-lysine intermediate is the Lys-109. Arg-130, Glu-164, Lys-278, and Lys-302 together coordinate NAD(+). Positions 395, 398, 413, and 418 each coordinate Zn(2+). The 76-residue stretch at 577 to 652 (VADAALSGLT…VRDEAWLESL (76 aa)) folds into the BRCT domain.

Belongs to the NAD-dependent DNA ligase family. LigA subfamily. The cofactor is Mg(2+). Mn(2+) serves as cofactor.

The catalysed reaction is NAD(+) + (deoxyribonucleotide)n-3'-hydroxyl + 5'-phospho-(deoxyribonucleotide)m = (deoxyribonucleotide)n+m + AMP + beta-nicotinamide D-nucleotide.. DNA ligase that catalyzes the formation of phosphodiester linkages between 5'-phosphoryl and 3'-hydroxyl groups in double-stranded DNA using NAD as a coenzyme and as the energy source for the reaction. It is essential for DNA replication and repair of damaged DNA. This chain is DNA ligase, found in Streptococcus pneumoniae serotype 2 (strain D39 / NCTC 7466).